The primary structure comprises 2766 residues: PDZ domain-containing protein 2 (2766 aa).

The 93-residue stretch at 85 to 177 folds into the PDZ 1 domain; it reads LSFGNIPVFG…GGFIYLIMLR (93 aa). Disordered regions lie at residues 189–315 and 419–452; these read GNSG…KTGK and MPGS…KLKS. Residues 242 to 254 show a composition bias toward acidic residues; it reads TADDPNSELENGA. Residues 280-296 show a composition bias toward basic and acidic residues; the sequence is HLERSEADSEVELRVPK. The 86-residue stretch at 334–419 folds into the PDZ 2 domain; sequence KMELLKESDG…MVQLVVASKM (86 aa). Ser-517 bears the Phosphoserine mark. The 87-residue stretch at 535–621 folds into the PDZ 3 domain; the sequence is IIGLYKEKGK…GLFVLTVRTK (87 aa). Over residues 627–636 the composition is skewed to polar residues; sequence LTPCSTPTHM. Positions 627-673 are disordered; it reads LTPCSTPTHMSRSSSPSFNTNSGGTPAGGGQEEGGSSSLGRKAPGPK. The span at 637-650 shows a compositional bias: low complexity; it reads SRSSSPSFNTNSGG. A PDZ 4 domain is found at 679–764; the sequence is EVTLNKEPRV…GPVRLVIGRH (86 aa). Polar residues predominate over residues 783–794; that stretch reads YQESREANSSPG. 2 disordered regions span residues 783–803 and 834–853; these read YQES…KSPS and AGSE…EDGS. Ser-891 and Ser-895 each carry phosphoserine. 10 disordered regions span residues 915–966, 990–1425, 1456–1531, 1725–1909, 1924–1967, 2015–2070, 2146–2174, 2262–2397, 2424–2450, and 2465–2496; these read NGGS…KQEE, HSIL…PSVL, ISLS…CPGT, DSQG…LPEQ, DTSC…IRQS, ERVP…ASQV, FSSH…AMGG, DRPT…ERRT, QLEI…GHAD, and TRAY…WATP. The segment covering 918–927 has biased composition (acidic residues); it reads SDDEDFDGEG. The span at 1021–1038 shows a compositional bias: basic and acidic residues; sequence GRKEMSGSRSSPKLEYRV. Composition is skewed to polar residues over residues 1040 to 1061, 1126 to 1137, and 1189 to 1220; these read TDTQ…SENL, PGDSSVPTNCGP, and SETP…SQGI. Composition is skewed to low complexity over residues 1379 to 1393 and 1456 to 1471; these read SQPP…SHHA and ISLS…SPSS. Ser-1767 carries the post-translational modification Phosphoserine. Over residues 1797 to 1806 the composition is skewed to basic residues; that stretch reads CSPKLKRLNS. Polar residues predominate over residues 1884-1901; sequence LRTSASDTSIRTFTSPLT. Low complexity-rich tracts occupy residues 1924-1937 and 1947-1963; these read DTSC…PRSG and SGSA…ALAG. 2 stretches are compositionally biased toward low complexity: residues 2280–2296 and 2305–2321; these read PPIN…GSPS and RSLS…SSLL. Polar residues-rich tracts occupy residues 2322–2347 and 2362–2372; these read PQMT…SNKG and PTSTVSPASPS. The PDZ 5 domain occupies 2550 to 2634; the sequence is FIVLNKKEGS…HKHALMIIKK (85 aa). A disordered region spans residues 2635 to 2667; the sequence is GNDQPGPSFKQEPPSANGKGPFPRRTLPLEPGA. A PDZ 6 domain is found at 2678-2763; that stretch reads CVEVLKTSAG…GPVQLVIRKH (86 aa).

Interacts with SCN10A, CTNND2 and PKP4. A secreted form is produced by caspase-mediated proteolytic cleavage. Expressed in the heart, liver, brain, spleen, lung, kidney, testis and skeletal muscle.

The protein localises to the nucleus. The protein resides in the cytoplasm. It is found in the endoplasmic reticulum. It localises to the cell junction. Its subcellular location is the secreted. In Rattus norvegicus (Rat), this protein is PDZ domain-containing protein 2 (Pdzd2).